Consider the following 435-residue polypeptide: Adenylosuccinate synthetase (435 aa).

Residues 22–28 (GDEGKGK) and 50–52 (GHT) contribute to the GTP site. Asp23 functions as the Proton acceptor in the catalytic mechanism. Positions 23 and 50 each coordinate Mg(2+). IMP is bound by residues 23–26 (DEGK), 48–51 (NAGH), Thr140, Arg154, Gln235, Thr250, and Arg314. The Proton donor role is filled by His51. Residue 310-316 (ATTGRKR) participates in substrate binding. GTP is bound by residues Arg316, 342 to 344 (KLD), and 424 to 426 (SVG).

The protein belongs to the adenylosuccinate synthetase family. Homodimer. Requires Mg(2+) as cofactor.

The protein resides in the cytoplasm. The catalysed reaction is IMP + L-aspartate + GTP = N(6)-(1,2-dicarboxyethyl)-AMP + GDP + phosphate + 2 H(+). It participates in purine metabolism; AMP biosynthesis via de novo pathway; AMP from IMP: step 1/2. Functionally, plays an important role in the de novo pathway of purine nucleotide biosynthesis. Catalyzes the first committed step in the biosynthesis of AMP from IMP. In Chlorobaculum parvum (strain DSM 263 / NCIMB 8327) (Chlorobium vibrioforme subsp. thiosulfatophilum), this protein is Adenylosuccinate synthetase.